Reading from the N-terminus, the 239-residue chain is Endonuclease V (239 aa).

Residues aspartate 50 and aspartate 118 each contribute to the Mg(2+) site.

It belongs to the endonuclease V family. Requires Mg(2+) as cofactor.

Its subcellular location is the cytoplasm. It catalyses the reaction Endonucleolytic cleavage at apurinic or apyrimidinic sites to products with a 5'-phosphate.. Functionally, DNA repair enzyme involved in the repair of deaminated bases. Selectively cleaves double-stranded DNA at the second phosphodiester bond 3' to a deoxyinosine leaving behind the intact lesion on the nicked DNA. The protein is Endonuclease V of Xylella fastidiosa (strain Temecula1 / ATCC 700964).